The chain runs to 2758 residues: Highly reducing polyketide synthase NEC1 (2758 aa).

A Ketosynthase family 3 (KS3) domain is found at 153 to 492 (EASSPIIGLD…GSNAHVVMDD (340 aa)). The disordered stretch occupies residues 512-576 (PRLPGSSSSR…NTDTLQTTDT (65 aa)). Residues 566–576 (TNTDTLQTTDT) show a composition bias toward low complexity. Residues 700 to 1044 (VFTGQGAQWP…GYATVLKRGD (345 aa)) form a malonyl-CoA:ACP transacylase (MAT) domain region. Serine 790 functions as the For malonyltransferase activity in the catalytic mechanism. Residues 1124 to 1255 (HELLGAPVPD…GFVRTEYSQT (132 aa)) form an N-terminal hotdog fold region. The tract at residues 1124–1442 (HELLGAPVPD…VFKTIPNTAS (319 aa)) is dehydratase (DH) domain. Residues 1124–1443 (HELLGAPVPD…FKTIPNTASS (320 aa)) form the PKS/mFAS DH domain. Residue histidine 1156 is the Proton acceptor; for dehydratase activity of the active site. Residues 1283–1443 (TSMVHADKVY…FKTIPNTASS (161 aa)) are C-terminal hotdog fold. Aspartate 1351 serves as the catalytic Proton donor; for dehydratase activity. Residues 1622-1727 (LEVGGGTGGA…RKLLKPGGKL (106 aa)) form a methyltransferase (CMet) domain region. An enoyl reductase (ER) domain region spans residues 2031–2344 (GTADVCFSED…LGKGEDAVVL (314 aa)). The tract at residues 2372–2553 (ASYMVVGGLG…PVAVSLDLPV (182 aa)) is ketoreductase (KR) domain. The Carrier domain occupies 2673 to 2750 (EAQAVVLDAL…ALAAAVAGRS (78 aa)). At serine 2710 the chain carries O-(pantetheine 4'-phosphoryl)serine.

Functionally, highly reducing polyketide synthase; part of the gene cluster that mediates the biosynthesis of nectriapyrone and its analogs phomopyrone A, acropyrone and zaepyrone. The nectriapyrone biosynthetic gene cluster consists of two genes, the highly reducing polyketide synthase NEC1 that produces a demethylated analog of nectriapyrone from one unit of acetyl-CoA and one unit of malonyl-CoA; and the O-methyltransferase NEC2 that further methylates the NEC1 product to yield nectriapyrone. Nectriapyrone is further hydrolyzed to nectriapyrone D, also known as gulypyrone B, by an unidentified hydrolase localized outside the nectriapyrone cluster. The polypeptide is Highly reducing polyketide synthase NEC1 (Pyricularia oryzae (strain 70-15 / ATCC MYA-4617 / FGSC 8958) (Rice blast fungus)).